The chain runs to 460 residues: Bifunctional protein GlmU (460 aa).

A pyrophosphorylase region spans residues 1–229 (MTNYAIILAA…FNESLGVNDR (229 aa)). UDP-N-acetyl-alpha-D-glucosamine-binding positions include 8–11 (LAAG), lysine 22, glutamine 72, and 77–78 (GT). Aspartate 102 lines the Mg(2+) pocket. UDP-N-acetyl-alpha-D-glucosamine-binding residues include glycine 139, glutamate 154, asparagine 169, and asparagine 227. Residue asparagine 227 participates in Mg(2+) binding. A linker region spans residues 230–250 (VALATAETVMRQRITQKHMVN). Residues 251-460 (GVTFQNPETV…RLAHHPSRSK (210 aa)) form an N-acetyltransferase region. UDP-N-acetyl-alpha-D-glucosamine contacts are provided by arginine 332 and lysine 350. Histidine 362 acts as the Proton acceptor in catalysis. Residues tyrosine 365 and asparagine 376 each coordinate UDP-N-acetyl-alpha-D-glucosamine. Residues alanine 379, 385-386 (NY), serine 404, alanine 422, and arginine 439 each bind acetyl-CoA.

This sequence in the N-terminal section; belongs to the N-acetylglucosamine-1-phosphate uridyltransferase family. In the C-terminal section; belongs to the transferase hexapeptide repeat family. In terms of assembly, homotrimer. Mg(2+) is required as a cofactor.

The protein localises to the cytoplasm. It catalyses the reaction alpha-D-glucosamine 1-phosphate + acetyl-CoA = N-acetyl-alpha-D-glucosamine 1-phosphate + CoA + H(+). It carries out the reaction N-acetyl-alpha-D-glucosamine 1-phosphate + UTP + H(+) = UDP-N-acetyl-alpha-D-glucosamine + diphosphate. The protein operates within nucleotide-sugar biosynthesis; UDP-N-acetyl-alpha-D-glucosamine biosynthesis; N-acetyl-alpha-D-glucosamine 1-phosphate from alpha-D-glucosamine 6-phosphate (route II): step 2/2. It functions in the pathway nucleotide-sugar biosynthesis; UDP-N-acetyl-alpha-D-glucosamine biosynthesis; UDP-N-acetyl-alpha-D-glucosamine from N-acetyl-alpha-D-glucosamine 1-phosphate: step 1/1. It participates in bacterial outer membrane biogenesis; LPS lipid A biosynthesis. Catalyzes the last two sequential reactions in the de novo biosynthetic pathway for UDP-N-acetylglucosamine (UDP-GlcNAc). The C-terminal domain catalyzes the transfer of acetyl group from acetyl coenzyme A to glucosamine-1-phosphate (GlcN-1-P) to produce N-acetylglucosamine-1-phosphate (GlcNAc-1-P), which is converted into UDP-GlcNAc by the transfer of uridine 5-monophosphate (from uridine 5-triphosphate), a reaction catalyzed by the N-terminal domain. This chain is Bifunctional protein GlmU, found in Streptococcus pyogenes serotype M6 (strain ATCC BAA-946 / MGAS10394).